The primary structure comprises 215 residues: Phosphoenolpyruvate guanylyltransferase (215 aa).

3 residues coordinate phosphoenolpyruvate: Thr-144, Gly-159, and Ser-162.

Belongs to the CofC family.

It carries out the reaction phosphoenolpyruvate + GTP + H(+) = enolpyruvoyl-2-diphospho-5'-guanosine + diphosphate. The protein operates within cofactor biosynthesis; coenzyme F420 biosynthesis. Functionally, guanylyltransferase that catalyzes the activation of phosphoenolpyruvate (PEP) as enolpyruvoyl-2-diphospho-5'-guanosine, via the condensation of PEP with GTP. It is involved in the biosynthesis of coenzyme F420, a hydride carrier cofactor. In Geodermatophilus obscurus (strain ATCC 25078 / DSM 43160 / JCM 3152 / CCUG 61914 / KCC A-0152 / KCTC 9177 / NBRC 13315 / NRRL B-3577 / G-20), this protein is Phosphoenolpyruvate guanylyltransferase.